Here is a 178-residue protein sequence, read N- to C-terminus: ATP-dependent protease subunit HslV (178 aa).

Residue Thr-7 is part of the active site. 3 residues coordinate Na(+): Gly-162, Cys-165, and Thr-168.

Belongs to the peptidase T1B family. HslV subfamily. As to quaternary structure, a double ring-shaped homohexamer of HslV is capped on each side by a ring-shaped HslU homohexamer. The assembly of the HslU/HslV complex is dependent on binding of ATP.

It is found in the cytoplasm. It carries out the reaction ATP-dependent cleavage of peptide bonds with broad specificity.. With respect to regulation, allosterically activated by HslU binding. Functionally, protease subunit of a proteasome-like degradation complex believed to be a general protein degrading machinery. This is ATP-dependent protease subunit HslV from Burkholderia ambifaria (strain MC40-6).